Here is a 344-residue protein sequence, read N- to C-terminus: MMAPKSLQTGLLILLLAKLKLAWGMTLVPRQVTCDYEAAASSGDTCTSFAAEWGLTEETFASLNPSAACPSLVAGQNYCMVGTISAASTTSSSSSTTSSSTTSSSTTSSSTTSSSTTTSSFTTTTASETTSTAANGVTTPMPVQSGMIDSCSKFDLIKSGDTCASIASTYNIDLSSFYSWNPAVGSSCAYLDVGYYVCVDAVPSPVQSGITESCSKFDLVESGDTCASIVSTYNIPLSSFYAWNPAVGSSCAYLDLGYYVCVGTDSSTVATSTTSAGNGITTPTPDEPGMVSDCTKFWLVGSDDTCTSIASSEDITVADIEKWNPKVGSTCTDVWLGDYICVGV.

Residues 1 to 24 (MMAPKSLQTGLLILLLAKLKLAWG) form the signal peptide. Residues 36–80 (YEAAASSGDTCTSFAAEWGLTEETFASLNPSAACPSLVAGQNYCM) enclose the LysM 1 domain. A compositionally biased stretch (low complexity) spans 88 to 134 (STTSSSSSTTSSSTTSSSTTSSSTTSSSTTTSSFTTTTASETTSTAA). A disordered region spans residues 88-141 (STTSSSSSTTSSSTTSSSTTSSSTTSSSTTTSSFTTTTASETTSTAANGVTTPM). 3 consecutive LysM domains span residues 153-199 (KFDL…YVCV), 216-262 (KFDL…YVCV), and 296-342 (KFWL…YICV).

Belongs to the secreted LysM effector family.

Its function is as follows. Might have a role in sequestration of chitin oligosaccharides (breakdown products of fungal cell walls that are released during invasion and act as triggers of host immunity) to dampen host defense. This is Secreted LysM effector LysM2 from Penicillium expansum (Blue mold rot fungus).